A 716-amino-acid chain; its full sequence is Pyruvate/proton symporter BtsT (716 aa).

The Cytoplasmic portion of the chain corresponds to 1–5 (MDTKK). Residues 6-26 (IFKHIPWVILGIIGAFCLAVV) traverse the membrane as a helical segment. Over 27 to 30 (ALRR) the chain is Periplasmic. A helical membrane pass occupies residues 31 to 51 (GEHISALWIVVASVSVYLVAY). The Cytoplasmic portion of the chain corresponds to 52-88 (RYYSLYIAQKVMKLDPTRATPAVINNDGLNYVPTNRY). A helical membrane pass occupies residues 89-109 (VLFGHHFAAIAGAGPLVGPVL). The Periplasmic segment spans residues 110–119 (AAQMGYLPGT). A helical membrane pass occupies residues 120–140 (LWLLAGVVLAGAVQDFMVLFI). The Cytoplasmic segment spans residues 141–163 (SSRRNGASLGEMIKEEMGPVPGT). A helical membrane pass occupies residues 164–184 (IALFGCFLIMIIILAVLALIV). Topologically, residues 185–191 (VKALAES) are periplasmic. Residues 192–212 (PWGVFTVCSTVPIALFMGIYM) traverse the membrane as a helical segment. The Cytoplasmic segment spans residues 213 to 222 (RFIRPGRVGE). The chain crosses the membrane as a helical span at residues 223 to 243 (VSVIGIVLLVASIYFGGVIAH). Topologically, residues 244–257 (DPYWGPALTFKDTT) are periplasmic. The chain crosses the membrane as a helical span at residues 258–278 (ITFALIGYAFVSALLPVWLIL). Residues 279–282 (APRD) are Cytoplasmic-facing. A helical membrane pass occupies residues 283–303 (YLATFLKIGVIVGLALGIVVL). Over 304-326 (NPELKMPAMTQYIDGTGPLWKGA) the chain is Periplasmic. A helical transmembrane segment spans residues 327-347 (LFPFLFITIACGAVSGFHALI). Residues 348-374 (SSGTTPKLLANETDARFIGYGAMLMES) lie on the Cytoplasmic side of the membrane. Residues 375–395 (FVAIMALVAASIIEPGLYFAM) traverse the membrane as a helical segment. At 396-484 (NTPPAGLGIT…HVFHKVLPMA (89 aa)) the chain is on the periplasmic side. Residues 485–505 (DMGFWYHFGILFEALFILTAL) form a helical membrane-spanning segment. The Cytoplasmic portion of the chain corresponds to 506-531 (DAGTRSGRFMLQDLLGNFIPFLKKTD). Residues 532 to 552 (SLVAGIIGTAGCVGLWGYLLY) traverse the membrane as a helical segment. Over 553 to 568 (QGVVDPLGGVKSLWPL) the chain is Periplasmic. Residues 569 to 589 (FGISNQMLAAVALVLGTVVLI) traverse the membrane as a helical segment. At 590–596 (KMKRTQY) the chain is on the cytoplasmic side. The chain crosses the membrane as a helical span at residues 597–617 (IWVTVVPAVWLLICTTWALGL). The Periplasmic segment spans residues 618-668 (KLFSTNPQMEGFFYMASQYKEKIANGTDLTAQQIANMNHIVVNNYTNAGLS). A helical membrane pass occupies residues 669 to 689 (ILFLIVVYSIIFYGFKTWLAV). At 690–716 (RNSDKRTDKETPYVPIPEGGVKISSHH) the chain is on the cytoplasmic side. The interval 696–716 (TDKETPYVPIPEGGVKISSHH) is disordered.

The protein belongs to the peptide transporter carbon starvation (CstA) (TC 2.A.114) family. As to quaternary structure, interacts with BtsS and YpdA.

The protein localises to the cell inner membrane. It carries out the reaction pyruvate(out) + H(+)(out) = pyruvate(in) + H(+)(in). Transport is inhibited by the protonophores 2,4-dinitrophenol (DNP) and carbonyl cyanide m-chlorophenyl hydrazone (CCCP), but not by ionophores such as valinomycin, nonactin and nigericin. Its function is as follows. Transports pyruvate with a high affinity and specificity. The process is driven by the proton motive force. Under nutrient limiting conditions, mediates the uptake of pyruvate, thus enabling it to be used as a carbon source for the growth and survival. Part of a nutrient-sensing regulatory network composed of the two-component regulatory systems BtsS/BtsR and YpdA/YpdB, and their respective target proteins, BtsT and YhjX. In Escherichia coli (strain K12), this protein is Pyruvate/proton symporter BtsT.